Consider the following 83-residue polypeptide: Small ribosomal subunit protein bS16c (83 aa).

It belongs to the bacterial ribosomal protein bS16 family.

The protein localises to the plastid. It is found in the chloroplast. This Chaetosphaeridium globosum (Charophycean green alga) protein is Small ribosomal subunit protein bS16c.